Reading from the N-terminus, the 432-residue chain is Argininosuccinate lyase (432 aa).

This sequence belongs to the lyase 1 family. Argininosuccinate lyase subfamily.

Its subcellular location is the cytoplasm. It carries out the reaction 2-(N(omega)-L-arginino)succinate = fumarate + L-arginine. It participates in amino-acid biosynthesis; L-arginine biosynthesis; L-arginine from L-ornithine and carbamoyl phosphate: step 3/3. The chain is Argininosuccinate lyase from Xanthomonas axonopodis pv. citri (strain 306).